We begin with the raw amino-acid sequence, 82 residues long: Putative Fe(2+) transport protein A (82 aa).

This sequence belongs to the FeoA family.

Might be involved in Fe(2+) ion uptake. The sequence is that of Putative Fe(2+) transport protein A from Methanocaldococcus jannaschii (strain ATCC 43067 / DSM 2661 / JAL-1 / JCM 10045 / NBRC 100440) (Methanococcus jannaschii).